Consider the following 503-residue polypeptide: GTPase Obg (503 aa).

Residues 2 to 159 (PQFVDRVVLH…KDVILELKSM (158 aa)) form the Obg domain. Residues 160 to 340 (ADVGLVGFPS…LKYALMDIVK (181 aa)) enclose the OBG-type G domain. GTP contacts are provided by residues 166-173 (GFPSAGKS), 191-195 (FTTLV), 212-215 (DVPG), 292-295 (NKMD), and 321-323 (STV). 2 residues coordinate Mg(2+): Ser173 and Thr193. The OCT domain maps to 371-444 (EFEVEADPSA…IGEITFEWDP (74 aa)). Residues 457–476 (RGTDVRLEQNTRATPEERKR) show a composition bias toward basic and acidic residues. The segment at 457 to 503 (RGTDVRLEQNTRATPEERKRASQARRGLIDENDFGDGEVAERERWQG) is disordered.

The protein belongs to the TRAFAC class OBG-HflX-like GTPase superfamily. OBG GTPase family. As to quaternary structure, monomer. Requires Mg(2+) as cofactor.

Its subcellular location is the cytoplasm. Functionally, an essential GTPase which binds GTP, GDP and possibly (p)ppGpp with moderate affinity, with high nucleotide exchange rates and a fairly low GTP hydrolysis rate. Plays a role in control of the cell cycle, stress response, ribosome biogenesis and in those bacteria that undergo differentiation, in morphogenesis control. The chain is GTPase Obg from Corynebacterium jeikeium (strain K411).